The sequence spans 388 residues: uncharacterized protein (388 aa).

Transmembrane regions (helical) follow at residues 18-38, 42-62, 89-111, 116-136, 145-165, 171-191, 219-239, 248-268, 287-307, 341-361, and 365-385; these read AAMF…PLYV, LHLS…ATLL, ASGL…WAIL, VLLG…GMWL, VISW…PLGL, AGLA…SGVI, TGLV…ALWF, GFAM…CAKF, TGLA…GAAI, AFQD…TPFI, and QVFL…HLLL.

Belongs to the major facilitator superfamily. YfcJ family.

It localises to the cell inner membrane. This is an uncharacterized protein from Salmonella typhimurium (strain LT2 / SGSC1412 / ATCC 700720).